The chain runs to 245 residues: MSEVSKKSGDVTVTELTEDGKLVRKIRSFVRREGRLTKGQESAMDNNWSTMGIDFAQQMLDWKEVYNREAPIVLEIGFGMGASLVEMAKHAPEKDFIGIEVHSPGVGACLMGAEETGLTNLRVMCHDAVEVFDYMIPDGSLETVQLFFPDPWHKTRHHKRRIVQPAFAEMLRKKLKIGGTFHMATDWENYAEHMVEVMNAAPGYKNTATDGDYIARPDDRPLTKFEARGHRLGHGVWDMKYTRTE.

E75, E100, D127, and D150 together coordinate S-adenosyl-L-methionine. D150 is a catalytic residue. Residues K154, D186, and 223–226 (TKFE) contribute to the substrate site.

The protein belongs to the class I-like SAM-binding methyltransferase superfamily. TrmB family.

It catalyses the reaction guanosine(46) in tRNA + S-adenosyl-L-methionine = N(7)-methylguanosine(46) in tRNA + S-adenosyl-L-homocysteine. The protein operates within tRNA modification; N(7)-methylguanine-tRNA biosynthesis. In terms of biological role, catalyzes the formation of N(7)-methylguanine at position 46 (m7G46) in tRNA. This Photobacterium profundum (strain SS9) protein is tRNA (guanine-N(7)-)-methyltransferase.